The primary structure comprises 22 residues: Chlorate reductase subunit gamma (22 aa).

The tract at residues 1-22 is disordered; it reads EXSEQNPNILEIKPGDTVKVXT.

As to quaternary structure, heterotrimer of alpha, beta and gamma subunits. Requires heme b as cofactor.

Its subcellular location is the cytoplasm. Functionally, may transfer electrons to the iron-sulfur centers of the beta subunit of chlorate reductase. In Stutzerimonas chloritidismutans (Pseudomonas chloritidismutans), this protein is Chlorate reductase subunit gamma.